The primary structure comprises 429 residues: Phosphoribosylamine--glycine ligase (429 aa).

One can recognise an ATP-grasp domain in the interval 109–316 (KDFLARHQIP…LVDLCLAACD (208 aa)). 135–196 (LREKGAPIVI…EEFLDGEEAS (62 aa)) contributes to the ATP binding site. Mg(2+)-binding residues include E286 and N288.

It belongs to the GARS family. As to quaternary structure, monomer. The cofactor is Mg(2+). Requires Mn(2+) as cofactor.

The enzyme catalyses 5-phospho-beta-D-ribosylamine + glycine + ATP = N(1)-(5-phospho-beta-D-ribosyl)glycinamide + ADP + phosphate + H(+). It participates in purine metabolism; IMP biosynthesis via de novo pathway; N(1)-(5-phospho-D-ribosyl)glycinamide from 5-phospho-alpha-D-ribose 1-diphosphate: step 2/2. The polypeptide is Phosphoribosylamine--glycine ligase (Salmonella typhi).